Here is a 390-residue protein sequence, read N- to C-terminus: Serpin B4 (390 aa).

M1 is subject to N-acetylmethionine.

It belongs to the serpin family. Ov-serpin subfamily. As to expression, squamous cells.

Its subcellular location is the cytoplasm. In terms of biological role, may act as a protease inhibitor to modulate the host immune response against tumor cells. In Homo sapiens (Human), this protein is Serpin B4 (SERPINB4).